The chain runs to 216 residues: A-type ATP synthase subunit D (216 aa).

This sequence belongs to the V-ATPase D subunit family. As to quaternary structure, has multiple subunits with at least A(3), B(3), C, D, E, F, H, I and proteolipid K(x). The N-terminus is blocked.

It is found in the cell membrane. Its function is as follows. Component of the A-type ATP synthase that produces ATP from ADP in the presence of a proton gradient across the membrane. The polypeptide is A-type ATP synthase subunit D (Sulfurisphaera tokodaii (strain DSM 16993 / JCM 10545 / NBRC 100140 / 7) (Sulfolobus tokodaii)).